The sequence spans 178 residues: Fluoride-specific ion channel FluC 2 (178 aa).

The next 4 helical transmembrane spans lie at 25–45, 63–83, 97–117, and 129–149; these read PDIH…GTAI, FVAN…LAGA, GLGM…LEGF, and IAYL…GVWA. Residues glycine 104 and serine 107 each coordinate Na(+).

The protein belongs to the fluoride channel Fluc/FEX (TC 1.A.43) family.

It localises to the cell membrane. The catalysed reaction is fluoride(in) = fluoride(out). Its activity is regulated as follows. Na(+) is not transported, but it plays an essential structural role and its presence is essential for fluoride channel function. Its function is as follows. Fluoride-specific ion channel. Important for reducing fluoride concentration in the cell, thus reducing its toxicity. The chain is Fluoride-specific ion channel FluC 2 from Bifidobacterium longum (strain NCC 2705).